Reading from the N-terminus, the 439-residue chain is MYSSPLCLTQDEFHPFIEALLPHVRAFAYTWFNLQARKRKYFKKHEKRMSKDEERAVKDELLGEKAEVKQKWASRLLAKLRKDIRPECREDFVLAVTGKKAPGCVLSNPDQKGKMRRIDCLRQADKVWRLDLVMVILFKGIPLESTDGERLVKAAACAHPVLCVQPHHIGVAVKELDLYLAYFVRERDAEQSSSPRTGVGSDQEDSKPITLDTTDFQESFVTSGVFSVTELIQVSRTPVVTGTGPNFSLGELQGHLAYDLNPASAGMRRTLPSTSSSGSKRHKSGSMEEDVDTSPGGDYYTSPNSPTSSSRNWTEDIEGGISSPVKKTEMDKSPFNSPSPQDSPRLSSFTQHHRPVIAVHSGIARSPHPTSALHFPATPILPQTASTYFPHTAIRYPPHLNPQDPLKDLVSLACDPATQQPGPPALRPTRPLQTVPLWD.

Position 1 is an N-acetylmethionine (methionine 1). A DNA-binding region (CTF/NF-I) is located at residues 1 to 195 (MYSSPLCLTQ…ERDAEQSSSP (195 aa)). 2 positions are modified to phosphoserine: serine 194 and serine 294. Positions 265-348 (AGMRRTLPST…SPQDSPRLSS (84 aa)) are disordered. Residues 299–312 (YYTSPNSPTSSSRN) are compositionally biased toward low complexity. The residue at position 300 (tyrosine 300) is a Phosphotyrosine. 7 positions are modified to phosphoserine: serine 302, serine 305, serine 323, serine 333, serine 337, serine 339, and serine 343. The span at 334-348 (PFNSPSPQDSPRLSS) shows a compositional bias: polar residues. Arginine 365 is modified (asymmetric dimethylarginine; alternate). Residue arginine 365 is modified to Omega-N-methylarginine; alternate. At arginine 395 the chain carries Asymmetric dimethylarginine. The 9aaTAD signature appears at 404 to 412 (DPLKDLVSL). The interval 415 to 439 (DPATQQPGPPALRPTRPLQTVPLWD) is disordered.

Belongs to the CTF/NF-I family. Binds DNA as a homodimer. In terms of tissue distribution, highest levels in skeletal muscle. Lower levels in heart, liver, kidney, lung and brain. Very low levels in testis and spleen.

Its subcellular location is the nucleus. In terms of biological role, recognizes and binds the palindromic sequence 5'-TTGGCNNNNNGCCAA-3' present in viral and cellular promoters and in the origin of replication of adenovirus type 2. These proteins are individually capable of activating transcription and replication. The sequence is that of Nuclear factor 1 C-type (Nfic) from Mus musculus (Mouse).